The sequence spans 359 residues: 3-dehydroquinate synthase (359 aa).

Residues 72–77 (EGEIHK), 106–110 (GVIGD), 130–131 (TS), Lys-143, Lys-152, and 170–173 (CLKT) contribute to the NAD(+) site. Residues Glu-185, His-248, and His-264 each contribute to the Zn(2+) site.

The protein belongs to the sugar phosphate cyclases superfamily. Dehydroquinate synthase family. Requires Co(2+) as cofactor. Zn(2+) is required as a cofactor. It depends on NAD(+) as a cofactor.

Its subcellular location is the cytoplasm. The catalysed reaction is 7-phospho-2-dehydro-3-deoxy-D-arabino-heptonate = 3-dehydroquinate + phosphate. The protein operates within metabolic intermediate biosynthesis; chorismate biosynthesis; chorismate from D-erythrose 4-phosphate and phosphoenolpyruvate: step 2/7. In terms of biological role, catalyzes the conversion of 3-deoxy-D-arabino-heptulosonate 7-phosphate (DAHP) to dehydroquinate (DHQ). This is 3-dehydroquinate synthase from Dehalococcoides mccartyi (strain ATCC BAA-2266 / KCTC 15142 / 195) (Dehalococcoides ethenogenes (strain 195)).